The sequence spans 780 residues: Cullin-1 (780 aa).

The region spanning 710-771 (DRKSVISACI…EKEYMLRTEG (62 aa)) is the Cullin neddylation domain. A Glycyl lysine isopeptide (Lys-Gly) (interchain with G-Cter in NEDD8) cross-link involves residue K724.

It belongs to the cullin family. Component of an SCF (SKP1-CUL1-F-box protein) E3 ubiquitin ligase complex composed of cul-1, fsn-1, rpm-1 and skr-1. Interacts with Skp1-related proteins skr-1, skr-2, skr-3, skr-4, skr-7, skr-8, skr-9 and skr-10. Neddylated; which enhances the ubiquitination activity of SCF. As to expression, ubiquitous.

The protein localises to the cytoplasm. It functions in the pathway protein modification; protein ubiquitination. Its function is as follows. Probable core component of multiple cullin-RING-based SCF (SKP1-CUL1-F-box) E3 ubiquitin-protein ligase complexes which mediate the ubiquitination and subsequent proteasomal degradation of target proteins. As a scaffold protein may contribute to catalysis through positioning of the substrate and the ubiquitin-conjugating enzyme. Required for developmentally programmed transitions from the G1 phase of the cell cycle to the G0 phase or the apoptotic pathway. The sequence is that of Cullin-1 (cul-1) from Caenorhabditis elegans.